We begin with the raw amino-acid sequence, 108 residues long: Latartoxin-2c (108 aa).

Residues 1-19 form the signal peptide; sequence MKVLVITALCFILLQNVLG. Positions 20–42 are cleaved as a propeptide — removed in mature form; that stretch reads EDTYEDLQNYIENLINENQDEAR. Positions 39–42 match the Processing quadruplet motif motif; it reads DEAR. Disulfide bonds link cysteine 44-cysteine 61, cysteine 51-cysteine 72, cysteine 60-cysteine 84, and cysteine 74-cysteine 82. The residue at position 107 (isoleucine 107) is an Isoleucine amide.

This sequence belongs to the neurotoxin 19 (CSTX) family. 11 (latartoxin) subfamily. In terms of processing, contains 4 disulfide bonds. Cleavage of the propeptide depends on the processing quadruplet motif (XXXR, with at least one of X being E). As to expression, expressed by the venom gland.

Its subcellular location is the secreted. Insect toxin. This chain is Latartoxin-2c, found in Lachesana tarabaevi (Spider).